The following is a 437-amino-acid chain: Trigger factor (437 aa).

One can recognise a PPIase FKBP-type domain in the interval 161 to 246; the sequence is DDQVNIDFVG…VNSVSAPVLP (86 aa).

It belongs to the FKBP-type PPIase family. Tig subfamily.

The protein localises to the cytoplasm. The catalysed reaction is [protein]-peptidylproline (omega=180) = [protein]-peptidylproline (omega=0). Functionally, involved in protein export. Acts as a chaperone by maintaining the newly synthesized protein in an open conformation. Functions as a peptidyl-prolyl cis-trans isomerase. This is Trigger factor from Pseudomonas putida (strain GB-1).